The chain runs to 471 residues: Exoglucanase 2 (471 aa).

The signal sequence occupies residues 1 to 18 (MIVGILTTLATLATLAAS). Residues 19–24 (VPLEER) constitute a propeptide that is removed on maturation. Position 25 is a pyrrolidone carboxylic acid (Gln25). The region spanning 26 to 62 (ACSSVWGQCGGQNWSGPTCCASGSTCVYSNDYYSQCL) is the CBM1 domain. Residues 64–101 (GAASSSSSTRAASTTSRVSPTTSRSSSATPPPGSTTTR) are compositionally biased toward low complexity. Residues 64–108 (GAASSSSSTRAASTTSRVSPTTSRSSSATPPPGSTTTRVPPVGSG) form a disordered region. Residues 66–106 (ASSSSSTRAASTTSRVSPTTSRSSSATPPPGSTTTRVPPVG) form a linker region. Residues 107–471 (SGTATYSGNP…LLTNANPSFL (365 aa)) form a catalytic region. O-linked (Man...) threonine glycosylation is found at Thr111 and Thr121. 4 O-linked (Man...) serine glycosylation sites follow: Ser130, Ser133, Ser134, and Ser139. The O-linked (Man...) threonine glycan is linked to Thr146. Cys200 and Cys259 are disulfide-bonded. Asp245 serves as the catalytic Proton donor. An N-linked (GlcNAc) asparagine glycan is attached at Asn313. Residue Asn334 is glycosylated (N-linked (GlcNAc...) (high mannose) asparagine). Residues Cys392 and Cys439 are joined by a disulfide bond.

It belongs to the glycosyl hydrolase 6 (cellulase B) family. Post-translationally, asn-334 contains mainly a high-mannose-type glycan (Hex(7-9)GlcNAc(2)) in a 3:1 ration with a single GlcNAc. Asn-313 was primarily unglycosylated with a small fraction (18%) bearing a single GlcNAc at this site.

The protein localises to the secreted. The enzyme catalyses Hydrolysis of (1-&gt;4)-beta-D-glucosidic linkages in cellulose and cellotetraose, releasing cellobiose from the non-reducing ends of the chains.. In terms of biological role, exocellobiohydrolases (CBH) that catalyzes the hydrolysis of 1,4-beta-D-glucosidic bonds in cellulose to release the disaccharide cellobiose. The degradation of cellulose involves an interplay between different cellulolytic enzymes. Hydrolysis starts with endoglucanases (EGs), which cut internal beta-1,4-glucosidic bonds in cellulose to reduce the polymerization degree of the substrate and create new chain ends for exocellobiohydrolases (CBHs). The CBHs release the disaccharide cellobiose from the non-reducing end of the cellulose polymer chain. Finally, beta-1,4-glucosidases hydrolyze the cellobiose and other short cello-oligosaccharides into glucose units. This Hypocrea jecorina (Trichoderma reesei) protein is Exoglucanase 2 (cbh2).